The chain runs to 612 residues: Alpha-1,3-galactosidase B (612 aa).

Positions 1–19 (MKWYLWGAVVLLYSLFGSA) are cleaved as a signal peptide. Cys20 carries N-palmitoyl cysteine lipidation. Residue Cys20 is the site of S-diacylglycerol cysteine attachment. 3 PbH1 repeats span residues 431 to 453 (TPTV…LFST), 454 to 476 (PRQT…LLCG), and 487 to 536 (CRNV…VIDA).

This sequence belongs to the glycosyl hydrolase 110 family. B subfamily.

It is found in the cell membrane. The enzyme catalyses Hydrolysis of terminal, non-reducing branched (1-&gt;3)-alpha-D-galactosidic residues, producing free D-galactose.. It carries out the reaction Hydrolysis of terminal, non-reducing linear (1-&gt;3)-alpha-D-galactosidic residues, producing free D-galactose.. It catalyses the reaction Hydrolysis of terminal, non-reducing alpha-D-galactose residues in alpha-D-galactosides, including galactose oligosaccharides, galactomannans and galactolipids.. Alpha-galactosidase. Removes both branched alpha-1,3-linked galactose residues of blood group B antigens and linear alpha-1,3-linked galactose structures. This is Alpha-1,3-galactosidase B (glaB) from Parabacteroides distasonis (strain ATCC 8503 / DSM 20701 / CIP 104284 / JCM 5825 / NCTC 11152).